The primary structure comprises 197 residues: ATP-dependent Clp protease proteolytic subunit 2 (197 aa).

Serine 101 functions as the Nucleophile in the catalytic mechanism. Histidine 126 is an active-site residue.

Belongs to the peptidase S14 family. Fourteen ClpP subunits assemble into 2 heptameric rings which stack back to back to give a disk-like structure with a central cavity, resembling the structure of eukaryotic proteasomes.

It is found in the cytoplasm. The enzyme catalyses Hydrolysis of proteins to small peptides in the presence of ATP and magnesium. alpha-casein is the usual test substrate. In the absence of ATP, only oligopeptides shorter than five residues are hydrolyzed (such as succinyl-Leu-Tyr-|-NHMec, and Leu-Tyr-Leu-|-Tyr-Trp, in which cleavage of the -Tyr-|-Leu- and -Tyr-|-Trp bonds also occurs).. Its function is as follows. Cleaves peptides in various proteins in a process that requires ATP hydrolysis. Has a chymotrypsin-like activity. Plays a major role in the degradation of misfolded proteins. This is ATP-dependent Clp protease proteolytic subunit 2 from Trichormus variabilis (strain ATCC 29413 / PCC 7937) (Anabaena variabilis).